A 326-amino-acid chain; its full sequence is Ribose-phosphate pyrophosphokinase 4 (326 aa).

Positions 140, 142, 151, and 155 each coordinate Mg(2+).

It belongs to the ribose-phosphate pyrophosphokinase family.

It is found in the cytoplasm. The catalysed reaction is D-ribose 5-phosphate + ATP = 5-phospho-alpha-D-ribose 1-diphosphate + AMP + H(+). Its pathway is metabolic intermediate biosynthesis; 5-phospho-alpha-D-ribose 1-diphosphate biosynthesis; 5-phospho-alpha-D-ribose 1-diphosphate from D-ribose 5-phosphate (route I): step 1/1. Its function is as follows. 5-phosphoribose 1-diphosphate synthase involved in nucleotide, histidine, and tryptophan biosynthesis. Active in heteromultimeric complexes with other 5-phosphoribose 1-diphosphate synthases (PRS2, PRS3, PRS4 and PRS5). The sequence is that of Ribose-phosphate pyrophosphokinase 4 (PRS4) from Saccharomyces cerevisiae (strain ATCC 204508 / S288c) (Baker's yeast).